Consider the following 688-residue polypeptide: Translation initiation factor IF-2 (688 aa).

The segment covering 50 to 62 has biased composition (basic and acidic residues); that stretch reads LLSGKEKSEKTKE. Positions 50–95 are disordered; that stretch reads LLSGKEKSEKTKEEDDEIETTAKNPIKESINNKKSNKRDDKNEKVN. The span at 72–82 shows a compositional bias: low complexity; the sequence is KNPIKESINNK. Basic and acidic residues predominate over residues 86 to 95; it reads KRDDKNEKVN. The region spanning 187 to 354 is the tr-type G domain; the sequence is KRSPIITVMG…MILLSSEILE (168 aa). Positions 196 to 203 are G1; that stretch reads GHVDHGKT. 196-203 is a binding site for GTP; sequence GHVDHGKT. A G2 region spans residues 221–225; it reads GITQH. Residues 242 to 245 are G3; it reads DTPG. GTP-binding positions include 242–246 and 296–299; these read DTPGH and NKID. Residues 296-299 are G4; it reads NKID. The G5 stretch occupies residues 332-334; the sequence is SAH.

Belongs to the TRAFAC class translation factor GTPase superfamily. Classic translation factor GTPase family. IF-2 subfamily.

The protein resides in the cytoplasm. Its function is as follows. One of the essential components for the initiation of protein synthesis. Protects formylmethionyl-tRNA from spontaneous hydrolysis and promotes its binding to the 30S ribosomal subunits. Also involved in the hydrolysis of GTP during the formation of the 70S ribosomal complex. The sequence is that of Translation initiation factor IF-2 from Clostridium botulinum (strain Langeland / NCTC 10281 / Type F).